The chain runs to 297 residues: D-alanine--D-alanine ligase (297 aa).

The region spanning 103–293 (KEILMHHRMP…FDSFVKSILE (191 aa)) is the ATP-grasp domain. 129–180 (ISFPVAVKPSSGGSSIATFKVKSLEELENAYQQASKHGEVMIEQWVTGKEIT) serves as a coordination point for ATP. Positions 247, 260, and 262 each coordinate Mg(2+).

Belongs to the D-alanine--D-alanine ligase family. Requires Mg(2+) as cofactor. The cofactor is Mn(2+).

It localises to the cytoplasm. It catalyses the reaction 2 D-alanine + ATP = D-alanyl-D-alanine + ADP + phosphate + H(+). The protein operates within cell wall biogenesis; peptidoglycan biosynthesis. Functionally, cell wall formation. The chain is D-alanine--D-alanine ligase from Francisella philomiragia subsp. philomiragia (strain ATCC 25017 / CCUG 19701 / FSC 153 / O#319-036).